Reading from the N-terminus, the 2603-residue chain is Ankyrin repeat domain-containing protein 17 (2603 aa).

Position 1 is an N-acetylmethionine (Met1). A compositionally biased stretch (low complexity) spans 1–32 (MEKATVPAAAEGEGSPPAAAAVAAPPAAAAAE). Residues 1–127 (MEKATVPAAA…DDDEEEEVSE (127 aa)) form a disordered region. A phosphoserine mark is found at Ser15 and Ser42. The span at 68–77 (PHHKAKRNRT) shows a compositional bias: basic residues. Over residues 82 to 92 (SSSESSSDSDN) the composition is skewed to low complexity. Positions 93–107 (SGGGGGGGGGGGGGT) are enriched in gly residues. Acidic residues predominate over residues 112-127 (SEEEEDDDDEEEEVSE). Ser152 bears the Phosphoserine mark. ANK repeat units lie at residues 229-258 (SDNRSLAEACSEGDVNAVRKLLIEGRSVNE), 262-291 (EGESLLCLACSAGYYELAQVLLAMHANVED), 296-325 (GDITPLMAAANGGHVKIVKLLLAHKADVNA), 329-358 (TGNTALTYACAGGYVDVVKVLLESGASIED), 362-391 (NGHTPLMEAGSAGHVEVARLLLENGAGINT), 396-425 (FKESALTLACYKGHLEMVRFLLEAGADQEH), 429-458 (EMHTALMEACMDGHVEVARLLLDSGAQVNM), 462-491 (SFESPLTLAACGGHVELAALLIERGASLEE), 495-524 (EGYTPLMEAAREGHEEMVALLLGQGANINA), 529-558 (TQETALTLACCGGFLEVADFLIKAGADIEL), 559-588 (GCSTPLMEAAQEGHLELVKYLLAAGANVHA), 592-621 (TGDTALTYACENGHTDVADVLLQAGADLEH), 625-654 (GGRTPLMKAARAGHVCTVQFLISKGANVNR), 659-688 (NDHTVLSLACAGGHLAVVELLLAHGADPTH), and 692-721 (DGSTMLIEAAKGGHTSVVCYLLDYPNNLLA). A Glycyl lysine isopeptide (Lys-Gly) (interchain with G-Cter in SUMO2) cross-link involves residue Lys314. Positions 770–792 (VRSKAASKQKSNSHLPANSQDVQ) are disordered. The span at 775-792 (ASKQKSNSHLPANSQDVQ) shows a compositional bias: polar residues. Ser799 carries the post-translational modification Phosphoserine. ANK repeat units lie at residues 1078 to 1107 (NHDTALTLACAGGHEELVQTLLERGASIEH), 1111 to 1140 (KGFTPLILAATAGHVGVVEILLDNGADIEA), 1145 to 1174 (TKDTPLSLACSGGRQEVVELLLARGANKEH), 1178 to 1207 (SDYTPLSLAASGGYVNIIKILLNAGAEINS), 1213 to 1242 (LGISPLMLAAMNGHTAAVKLLLDMGSDINA), 1247 to 1276 (NRNTALTLACFQGRTEVVSLLLDRKANVEH), 1280 to 1309 (TGLTPLMEAASGGYAEVGRVLLDKGADVNA), 1315 to 1344 (SRDTALTIAADKGHYKFCELLIGKGAHIDV), 1348 to 1377 (KGNTPLWLAANGGHLDVVQLLVQATADVDA), and 1381 to 1410 (RKITPLMAAFRKGHVKVVRYLVKEVNQFPS). The stretch at 1438–1522 (VQAKDRQAAE…EKEKLKVEEE (85 aa)) forms a coiled coil. Position 1453 is a phosphoserine (Ser1453). Disordered stretches follow at residues 1475–1496 (AKREKRKEKRRKKKEEQRRKLE) and 1513–1713 (EKEK…PKRE). Positions 1477-1487 (REKRKEKRRKK) are enriched in basic residues. Low complexity-rich tracts occupy residues 1526 to 1546 (LTEPPSATTTTTIGISATWTT), 1598 to 1607 (ESKSSSTSES), and 1616 to 1636 (SSCSDESSNSNSSRKSNNHAS). A Phosphoserine modification is found at Ser1631. 2 stretches are compositionally biased toward polar residues: residues 1638–1648 (VVTTTMASKKQ) and 1671–1699 (LSETVNEGTSNSLSTCTKSGPSPLSSPNG). Phosphoserine occurs at positions 1692, 1696, and 1705. Positions 1721-1785 (RRSKKVSVPS…ESTRQATQLI (65 aa)) constitute a KH domain. Position 1870 is an asymmetric dimethylarginine (Arg1870). 3 disordered regions span residues 1902 to 1991 (PRLP…PSVR), 2007 to 2195 (TTVT…SSSA), and 2269 to 2327 (VSSQ…YGSV). 2 stretches are compositionally biased toward low complexity: residues 1946–1989 (SNQN…SSPS) and 2007–2024 (TTVTTTASNNSTAPTNAT). 6 positions are modified to phosphoserine: Ser2038, Ser2040, Ser2041, Ser2043, Ser2055, and Ser2063. Low complexity-rich tracts occupy residues 2068–2077 (ASASEQEASS), 2087–2108 (RPPHSSSSSGSSSGHSTQQQPP), and 2175–2189 (PPSHATAAPHKTPAP). Positions 2269 to 2298 (VSSQSTPESMLSGKSSYLPNSDPLHQSDTS) are enriched in polar residues. Residues 2303–2313 (FRPPLQRPAPS) show a composition bias toward pro residues. A Phosphoserine modification is found at Ser2373. The tract at residues 2378–2447 (LTPCSSASNE…TGTSAPSVIG (70 aa)) is disordered. The span at 2379–2391 (TPCSSASNESPAQ) shows a compositional bias: polar residues. Residues 2392-2411 (SVSSGVRAPSPAPSSVPLGS) show a composition bias toward low complexity. Phosphoserine is present on Ser2401. Residues 2435–2447 (IRQTGTSAPSVIG) show a composition bias toward polar residues.

Interacts (via N-terminus) with NOD2. Interacts with CDK2, MCM3, MCM5, MCM7, CDC6 and PCNA. Interacts with MAVS and IFIH1. Interacts (via the second ankyrin repeat cluster) with RIGI. Post-translationally, phosphorylated by CDK2. As to expression, highly expressed in fetal liver. Detected in adult liver cells, ovarian oocytes, seminiferous tubules of the testes and pelvic region of the kidney. It was not detected in heart, gut, lung, spleen and skeletal muscle. Earliest specific in situ marker of hepatic differentiation during embryogenesis, useful for characterization of inductive events involved in hepatic specification.

It localises to the cytoplasm. The protein resides in the nucleus. Its function is as follows. Could play pivotal roles in cell cycle and DNA regulation. Involved in innate immune defense against viruse by positively regulating the viral dsRNA receptors RIGI and IFIH1 signaling pathways. Involves in NOD2- and NOD1-mediated responses to bacteria suggesting a role in innate antibacterial immune pathways too. Could play a central role for the formation and/or maintenance of the blood vessels of the circulation system. The polypeptide is Ankyrin repeat domain-containing protein 17 (Ankrd17) (Mus musculus (Mouse)).